The sequence spans 257 residues: Outer membrane protein YaiO (257 aa).

The signal sequence occupies residues 1-19 (MIKRTLLAAAIFSALPAYA).

The protein resides in the cell outer membrane. The protein is Outer membrane protein YaiO (yaiO) of Escherichia coli (strain K12).